The primary structure comprises 450 residues: Glucose-6-phosphate isomerase (450 aa).

Threonine 39 bears the Phosphothreonine mark. The active-site Proton donor is the glutamate 291. Active-site residues include histidine 312 and lysine 426.

Belongs to the GPI family.

Its subcellular location is the cytoplasm. It catalyses the reaction alpha-D-glucose 6-phosphate = beta-D-fructose 6-phosphate. It participates in carbohydrate biosynthesis; gluconeogenesis. It functions in the pathway carbohydrate degradation; glycolysis; D-glyceraldehyde 3-phosphate and glycerone phosphate from D-glucose: step 2/4. Its function is as follows. Catalyzes the reversible isomerization of glucose-6-phosphate to fructose-6-phosphate. The polypeptide is Glucose-6-phosphate isomerase (Bacillus cereus (strain G9842)).